The chain runs to 238 residues: ATP-dependent dethiobiotin synthetase BioD (238 aa).

An ATP-binding site is contributed by 12-17 (EVGKTV). Threonine 16 contributes to the Mg(2+) binding site. Lysine 37 is an active-site residue. Threonine 41 lines the substrate pocket. ATP contacts are provided by residues aspartate 50, 109 to 112 (EGAG), 170 to 171 (GS), and 200 to 202 (PAG). Mg(2+) contacts are provided by aspartate 50 and glutamate 109.

The protein belongs to the dethiobiotin synthetase family. As to quaternary structure, homodimer. It depends on Mg(2+) as a cofactor.

Its subcellular location is the cytoplasm. It catalyses the reaction (7R,8S)-7,8-diammoniononanoate + CO2 + ATP = (4R,5S)-dethiobiotin + ADP + phosphate + 3 H(+). It functions in the pathway cofactor biosynthesis; biotin biosynthesis; biotin from 7,8-diaminononanoate: step 1/2. Catalyzes a mechanistically unusual reaction, the ATP-dependent insertion of CO2 between the N7 and N8 nitrogen atoms of 7,8-diaminopelargonic acid (DAPA, also called 7,8-diammoniononanoate) to form a ureido ring. The polypeptide is ATP-dependent dethiobiotin synthetase BioD (Streptomyces coelicolor (strain ATCC BAA-471 / A3(2) / M145)).